Here is a 127-residue protein sequence, read N- to C-terminus: Large ribosomal subunit protein bL21c (127 aa).

Belongs to the bacterial ribosomal protein bL21 family. Part of the 50S ribosomal subunit.

It localises to the plastid. The protein resides in the chloroplast. In terms of biological role, this protein binds to 23S rRNA. The protein is Large ribosomal subunit protein bL21c of Adiantum capillus-veneris (Maidenhair fern).